The chain runs to 150 residues: MSSKEIVSNRKALRNYEVLDTLEAGVVLTGTEIKSLRDHGGNLGDAYVAISKGEAWLLNASIAPYRFGNIYNHEERRKRKLLLHRYEIRKLEGRVAQKGITIIPLGMFLSRGYVKIRLGCCRGKKAHDKRQTIIAREKQREVESAMKRYR.

Belongs to the SmpB family.

The protein localises to the cytoplasm. In terms of biological role, required for rescue of stalled ribosomes mediated by trans-translation. Binds to transfer-messenger RNA (tmRNA), required for stable association of tmRNA with ribosomes. tmRNA and SmpB together mimic tRNA shape, replacing the anticodon stem-loop with SmpB. tmRNA is encoded by the ssrA gene; the 2 termini fold to resemble tRNA(Ala) and it encodes a 'tag peptide', a short internal open reading frame. During trans-translation Ala-aminoacylated tmRNA acts like a tRNA, entering the A-site of stalled ribosomes, displacing the stalled mRNA. The ribosome then switches to translate the ORF on the tmRNA; the nascent peptide is terminated with the 'tag peptide' encoded by the tmRNA and targeted for degradation. The ribosome is freed to recommence translation, which seems to be the essential function of trans-translation. The sequence is that of SsrA-binding protein from Chlamydia caviae (strain ATCC VR-813 / DSM 19441 / 03DC25 / GPIC) (Chlamydophila caviae).